A 452-amino-acid chain; its full sequence is Probable hexaprenyl pyrophosphate synthase, mitochondrial (452 aa).

Residues lysine 108, arginine 111, and histidine 204 each coordinate isopentenyl diphosphate. Aspartate 211 and aspartate 215 together coordinate Mg(2+). Residue arginine 220 participates in an all-trans-polyprenyl diphosphate binding. Isopentenyl diphosphate is bound at residue arginine 221. An all-trans-polyprenyl diphosphate is bound by residues lysine 303, threonine 304, glutamine 341, and lysine 358.

It belongs to the FPP/GGPP synthase family. Mg(2+) serves as cofactor.

The protein resides in the mitochondrion. It functions in the pathway cofactor biosynthesis; ubiquinone biosynthesis. Functionally, assembly of polyisoprenoid side chains. The polyprenyl synthase of coenzyme Q biosynthesis catalyzes the formation from isopentenyl diphosphate of all trans-polyprenyl pyrophosphates generally ranging in length of between 6 and 10 isoprene units depending on the species. This chain is Probable hexaprenyl pyrophosphate synthase, mitochondrial (COQ1), found in Yarrowia lipolytica (strain CLIB 122 / E 150) (Yeast).